The chain runs to 520 residues: GMP synthase [glutamine-hydrolyzing] (520 aa).

The 194-residue stretch at 12 to 205 (KIIVLDYGSQ…AISICGGRGD (194 aa)) folds into the Glutamine amidotransferase type-1 domain. Residue Cys89 is the Nucleophile of the active site. Active-site residues include His179 and Glu181. Positions 206 to 395 (WSMDNFIDMQ…LGMPDEVVWR (190 aa)) constitute a GMPS ATP-PPase domain. Residue 233-239 (SGGVDSS) participates in ATP binding.

As to quaternary structure, homodimer.

The enzyme catalyses XMP + L-glutamine + ATP + H2O = GMP + L-glutamate + AMP + diphosphate + 2 H(+). It functions in the pathway purine metabolism; GMP biosynthesis; GMP from XMP (L-Gln route): step 1/1. In terms of biological role, catalyzes the synthesis of GMP from XMP. This Streptococcus equi subsp. equi (strain 4047) protein is GMP synthase [glutamine-hydrolyzing].